A 344-amino-acid chain; its full sequence is Glycerol-3-phosphate dehydrogenase [NAD(P)+] (344 aa).

NADPH-binding residues include W18, H38, and K115. Residues K115, G144, and T146 each coordinate sn-glycerol 3-phosphate. An NADPH-binding site is contributed by A148. Residues K199, D252, S262, R263, and N264 each contribute to the sn-glycerol 3-phosphate site. The active-site Proton acceptor is the K199. R263 contributes to the NADPH binding site. 2 residues coordinate NADPH: V288 and E290.

Belongs to the NAD-dependent glycerol-3-phosphate dehydrogenase family.

The protein resides in the cytoplasm. It catalyses the reaction sn-glycerol 3-phosphate + NAD(+) = dihydroxyacetone phosphate + NADH + H(+). It carries out the reaction sn-glycerol 3-phosphate + NADP(+) = dihydroxyacetone phosphate + NADPH + H(+). Its pathway is membrane lipid metabolism; glycerophospholipid metabolism. Its function is as follows. Catalyzes the reduction of the glycolytic intermediate dihydroxyacetone phosphate (DHAP) to sn-glycerol 3-phosphate (G3P), the key precursor for phospholipid synthesis. The protein is Glycerol-3-phosphate dehydrogenase [NAD(P)+] of Hydrogenovibrio crunogenus (strain DSM 25203 / XCL-2) (Thiomicrospira crunogena).